The primary structure comprises 208 residues: uncharacterized protein (208 aa).

Disordered stretches follow at residues 91–115 (PGQAGSQEAADGKGRLPDITSPSQD), 127–156 (QSWSSGTSRPTCLAYRPRHLSPSSKPKRPG), and 182–208 (NKLGSSDDSDTDRFSSVTSGSSRRKFK). Residues 127–136 (QSWSSGTSRP) are compositionally biased toward polar residues.

This is an uncharacterized protein from Rattus norvegicus (Rat).